A 389-amino-acid chain; its full sequence is MQYKKTLVASALAATTLAAYAPSEPWSTLTPTATYSGGVTDYASTFGIAVQPISTTSSASSAATTASSKAKRAASQIGDGQVQAATTTASVSTKSTAAAVSQIGDGQVQATTKTTAAAVSQIGDGQIQATTKTTSAKTTAAAVSQIGDGQIQATTTTLAPKSTAAAVSQIGDGQVQATTKTTAAAVSQIGDGQVQATTKTTAAAVSQIGDGQVQATTKTTAAAVSQIGDGQVQATTKTTAAAVSQITDGQVQATTKTTQAASQVSDGQVQATTATSASAAATSTDPVDAVSCKTSGTLEMNLKGGILTDGKGRIGSIVANRQFQFDGPPPQAGAIYAAGWSITPDGNLAIGDNDVFYQCLSGTFYNLYDEHIGSQCTPVHLEAIDLIDC.

Positions 1–18 (MQYKKTLVASALAATTLA) are cleaved as a signal peptide. Residues 19-72 (AYAPSEPWSTLTPTATYSGGVTDYASTFGIAVQPISTTSSASSAATTASSKAKR) constitute a propeptide that is removed on maturation. 10 PIR1/2/3 repeats span residues 71–89 (KRAA…TTTA), 97–115 (AAAV…TKTT), 116–134 (AAAV…TKTT), 140–158 (AAAV…TTTL), 164–182 (AAAV…TKTT), 183–201 (AAAV…TKTT), 202–220 (AAAV…TKTT), 221–239 (AAAV…TKTT), 240–257 (AAAV…TTKT), and 258–276 (TQAA…TATS).

Belongs to the PIR protein family. Covalently linked to beta-1,3-glucan of the inner cell wall layer via an alkali-sensitive ester linkage between the gamma-carboxyl group of glutamic acids, arising from specific glutamines within the PIR1/2/3 repeats, and hydroxyl groups of glucoses of beta-1,3-glucan chains. Post-translationally, the propeptide is cleaved off in the late Golgi. While both peptides are secreted, only a fraction of the mature glycoprotein is incorporated into the cell wall. In terms of processing, O-glycosylated. Extensively O-mannosylated.

It is found in the secreted. It localises to the cell wall. In terms of biological role, component of the outer cell wall layer. Required for stability of the cell wall and for optimal growth. Required for resistance against several antifungal and cell wall-perturbing agents and for tolerance to heat shock. The protein is Cell wall mannoprotein HSP150 (HSP150) of Saccharomyces cerevisiae (strain YJM789) (Baker's yeast).